The primary structure comprises 274 residues: Elongation factor Ts (274 aa).

Residues 79-82 are involved in Mg(2+) ion dislocation from EF-Tu; sequence TDFV.

The protein belongs to the EF-Ts family.

Its subcellular location is the cytoplasm. Associates with the EF-Tu.GDP complex and induces the exchange of GDP to GTP. It remains bound to the aminoacyl-tRNA.EF-Tu.GTP complex up to the GTP hydrolysis stage on the ribosome. This chain is Elongation factor Ts, found in Porphyromonas gingivalis (strain ATCC 33277 / DSM 20709 / CIP 103683 / JCM 12257 / NCTC 11834 / 2561).